A 526-amino-acid chain; its full sequence is Calcium-dependent protein kinase 28 (526 aa).

Residues 1-37 form a disordered region; that stretch reads MQPDPQPHGRGREKAAGAGPRLPPPVTAPSVGRPASV. Residues 49–307 form the Protein kinase domain; the sequence is YRIGKKLGQG…AHEVLCHPWI (259 aa). Residues 55–63 and lysine 78 each bind ATP; that span reads LGQGQFGTT. The active-site Proton acceptor is the aspartate 173. The autoinhibitory domain stretch occupies residues 313–343; it reads APDKPIDSAVLSRLKHFSAMNKLKKMALRVI. EF-hand domains are found at residues 350-385, 386-421, 422-457, and 460-491; these read EEIG…VGSD, LMEP…MNKL, EREE…FGLS, and HLED…GNAG. Aspartate 363, aspartate 365, serine 367, threonine 369, glutamate 374, aspartate 399, aspartate 401, serine 403, threonine 405, glutamate 410, aspartate 435, aspartate 437, serine 439, glutamate 446, aspartate 469, asparagine 471, aspartate 473, glutamine 475, and glutamate 480 together coordinate Ca(2+).

This sequence belongs to the protein kinase superfamily. Ser/Thr protein kinase family. CDPK subfamily.

The catalysed reaction is L-seryl-[protein] + ATP = O-phospho-L-seryl-[protein] + ADP + H(+). The enzyme catalyses L-threonyl-[protein] + ATP = O-phospho-L-threonyl-[protein] + ADP + H(+). With respect to regulation, activated by calcium. Autophosphorylation may play an important role in the regulation of the kinase activity. In terms of biological role, may play a role in signal transduction pathways that involve calcium as a second messenger. In Oryza sativa subsp. japonica (Rice), this protein is Calcium-dependent protein kinase 28.